The following is a 287-amino-acid chain: Elongation factor Ts (287 aa).

Residues 80 to 83 (TDFL) form an involved in Mg(2+) ion dislocation from EF-Tu region.

This sequence belongs to the EF-Ts family.

Its subcellular location is the cytoplasm. Its function is as follows. Associates with the EF-Tu.GDP complex and induces the exchange of GDP to GTP. It remains bound to the aminoacyl-tRNA.EF-Tu.GTP complex up to the GTP hydrolysis stage on the ribosome. This Pseudomonas syringae pv. syringae (strain B728a) protein is Elongation factor Ts.